Consider the following 165-residue polypeptide: Methylated-DNA--protein-cysteine methyltransferase (165 aa).

The active-site Nucleophile; methyl group acceptor is the Cys126.

It belongs to the MGMT family.

Its subcellular location is the cytoplasm. It carries out the reaction a 6-O-methyl-2'-deoxyguanosine in DNA + L-cysteinyl-[protein] = S-methyl-L-cysteinyl-[protein] + a 2'-deoxyguanosine in DNA. The catalysed reaction is a 4-O-methyl-thymidine in DNA + L-cysteinyl-[protein] = a thymidine in DNA + S-methyl-L-cysteinyl-[protein]. In terms of biological role, involved in the cellular defense against the biological effects of O6-methylguanine (O6-MeG) and O4-methylthymine (O4-MeT) in DNA. Repairs the methylated nucleobase in DNA by stoichiometrically transferring the methyl group to a cysteine residue in the enzyme. This is a suicide reaction: the enzyme is irreversibly inactivated. This Mycolicibacterium paratuberculosis (strain ATCC BAA-968 / K-10) (Mycobacterium paratuberculosis) protein is Methylated-DNA--protein-cysteine methyltransferase.